The following is a 391-amino-acid chain: Formate-dependent phosphoribosylglycinamide formyltransferase (391 aa).

Residues glutamate 18–leucine 19 and glutamate 78 contribute to the N(1)-(5-phospho-beta-D-ribosyl)glycinamide site. Residues arginine 110, lysine 151, serine 156–glutamine 161, glutamate 191–isoleucine 194, and glutamate 199 contribute to the ATP site. One can recognise an ATP-grasp domain in the interval glutamate 115–leucine 305. Mg(2+)-binding residues include glutamate 264 and glutamate 276. Residues aspartate 283, lysine 353, and arginine 360–arginine 361 each bind N(1)-(5-phospho-beta-D-ribosyl)glycinamide.

Belongs to the PurK/PurT family. Homodimer.

The catalysed reaction is N(1)-(5-phospho-beta-D-ribosyl)glycinamide + formate + ATP = N(2)-formyl-N(1)-(5-phospho-beta-D-ribosyl)glycinamide + ADP + phosphate + H(+). The protein operates within purine metabolism; IMP biosynthesis via de novo pathway; N(2)-formyl-N(1)-(5-phospho-D-ribosyl)glycinamide from N(1)-(5-phospho-D-ribosyl)glycinamide (formate route): step 1/1. Involved in the de novo purine biosynthesis. Catalyzes the transfer of formate to 5-phospho-ribosyl-glycinamide (GAR), producing 5-phospho-ribosyl-N-formylglycinamide (FGAR). Formate is provided by PurU via hydrolysis of 10-formyl-tetrahydrofolate. This chain is Formate-dependent phosphoribosylglycinamide formyltransferase, found in Synechocystis sp. (strain ATCC 27184 / PCC 6803 / Kazusa).